Here is a 148-residue protein sequence, read N- to C-terminus: Large ribosomal subunit protein bL9 (148 aa).

It belongs to the bacterial ribosomal protein bL9 family.

Its function is as follows. Binds to the 23S rRNA. The polypeptide is Large ribosomal subunit protein bL9 (Azotobacter vinelandii (strain DJ / ATCC BAA-1303)).